The primary structure comprises 72 residues: Large ribosomal subunit protein bL31 (72 aa).

Cys-16, Cys-18, Cys-37, and Cys-40 together coordinate Zn(2+).

It belongs to the bacterial ribosomal protein bL31 family. Type A subfamily. As to quaternary structure, part of the 50S ribosomal subunit. Zn(2+) is required as a cofactor.

Its function is as follows. Binds the 23S rRNA. This chain is Large ribosomal subunit protein bL31, found in Idiomarina loihiensis (strain ATCC BAA-735 / DSM 15497 / L2-TR).